The primary structure comprises 520 residues: 2-isopropylmalate synthase (520 aa).

A Pyruvate carboxyltransferase domain is found at 12 to 274 (IRIFDTTLRD…DSAINTPRIV (263 aa)). 4 residues coordinate Mn(2+): Asp21, His209, His211, and Asn245. The tract at residues 396 to 520 (RLASMTISDV…VIAGKTAAVA (125 aa)) is regulatory domain.

Belongs to the alpha-IPM synthase/homocitrate synthase family. LeuA type 1 subfamily. In terms of assembly, homodimer. It depends on Mn(2+) as a cofactor.

The protein localises to the cytoplasm. It catalyses the reaction 3-methyl-2-oxobutanoate + acetyl-CoA + H2O = (2S)-2-isopropylmalate + CoA + H(+). It participates in amino-acid biosynthesis; L-leucine biosynthesis; L-leucine from 3-methyl-2-oxobutanoate: step 1/4. Functionally, catalyzes the condensation of the acetyl group of acetyl-CoA with 3-methyl-2-oxobutanoate (2-ketoisovalerate) to form 3-carboxy-3-hydroxy-4-methylpentanoate (2-isopropylmalate). This is 2-isopropylmalate synthase from Xanthomonas oryzae pv. oryzae (strain KACC10331 / KXO85).